The primary structure comprises 247 residues: Coproheme decarboxylase (247 aa).

Fe-coproporphyrin III-binding positions include Arg-129, 143-147 (YPMDK), His-170, Gln-183, and Ser-221. Tyr-143 is an active-site residue.

Belongs to the ChdC family. Type 1 subfamily. The cofactor is Fe-coproporphyrin III.

The catalysed reaction is Fe-coproporphyrin III + 2 H2O2 + 2 H(+) = heme b + 2 CO2 + 4 H2O. It carries out the reaction Fe-coproporphyrin III + H2O2 + H(+) = harderoheme III + CO2 + 2 H2O. The enzyme catalyses harderoheme III + H2O2 + H(+) = heme b + CO2 + 2 H2O. Its pathway is porphyrin-containing compound metabolism; protoheme biosynthesis. Its function is as follows. Involved in coproporphyrin-dependent heme b biosynthesis. Catalyzes the decarboxylation of Fe-coproporphyrin III (coproheme) to heme b (protoheme IX), the last step of the pathway. The reaction occurs in a stepwise manner with a three-propionate intermediate. The protein is Coproheme decarboxylase of Bacillus cereus (strain B4264).